Consider the following 193-residue polypeptide: NADPH:quinone oxidoreductase MdaB (193 aa).

Residues Ser-16–Thr-23, Gly-69–Met-72, Tyr-108, and Thr-124–Ala-127 each bind FAD.

This sequence belongs to the oxidoreductase MdaB family. Homodimer. FAD is required as a cofactor.

Its subcellular location is the cytoplasm. The enzyme catalyses a quinone + NADPH + H(+) = a quinol + NADP(+). In terms of biological role, NADPH-specific quinone reductase. In Escherichia coli O157:H7, this protein is NADPH:quinone oxidoreductase MdaB.